We begin with the raw amino-acid sequence, 228 residues long: ATP synthase subunit a 2 (228 aa).

6 helical membrane passes run 16-36 (VGTT…GAWL), 74-94 (VFPF…SSLI), 103-123 (DLSA…WFGI), 139-159 (SPFL…ALAV), 173-193 (LLVL…LHIV), and 194-214 (EALV…AGAI).

This sequence belongs to the ATPase A chain family. F-type ATPases have 2 components, CF(1) - the catalytic core - and CF(0) - the membrane proton channel. CF(1) has five subunits: alpha(3), beta(3), gamma(1), delta(1), epsilon(1). CF(0) has three main subunits: a(1), b(2) and c(9-12). The alpha and beta chains form an alternating ring which encloses part of the gamma chain. CF(1) is attached to CF(0) by a central stalk formed by the gamma and epsilon chains, while a peripheral stalk is formed by the delta and b chains.

The protein localises to the cell inner membrane. Its function is as follows. Key component of the proton channel; it plays a direct role in the translocation of protons across the membrane. In Pelobacter propionicus (strain DSM 2379 / NBRC 103807 / OttBd1), this protein is ATP synthase subunit a 2.